The chain runs to 435 residues: GTPase Der (435 aa).

EngA-type G domains are found at residues 4–167 (PVVA…PAEK) and 175–350 (ISFS…DNQN). GTP contacts are provided by residues 10–17 (GQPNVGKS), 57–61 (DTGGI), 119–122 (NKAD), 181–188 (GRPNVGKS), 228–232 (DTAGI), and 293–296 (NKWD). The KH-like domain maps to 351 to 435 (QRIQSSVLND…PIKILPRKRK (85 aa)).

It belongs to the TRAFAC class TrmE-Era-EngA-EngB-Septin-like GTPase superfamily. EngA (Der) GTPase family. As to quaternary structure, associates with the 50S ribosomal subunit.

In terms of biological role, GTPase that plays an essential role in the late steps of ribosome biogenesis. The polypeptide is GTPase Der (Lactobacillus acidophilus (strain ATCC 700396 / NCK56 / N2 / NCFM)).